A 158-amino-acid polypeptide reads, in one-letter code: Large ribosomal subunit protein uL16 (158 aa).

It belongs to the universal ribosomal protein uL16 family. Part of the 50S ribosomal subunit.

Binds 23S rRNA and is also seen to make contacts with the A and possibly P site tRNAs. In Synechococcus sp. (strain CC9605), this protein is Large ribosomal subunit protein uL16.